The chain runs to 196 residues: dITP/XTP pyrophosphatase (196 aa).

8–13 contributes to the substrate binding site; it reads TKNEGK. The Mg(2+) site is built by Glu-41 and Asp-70. Asp-70 serves as the catalytic Proton acceptor. Substrate-binding positions include Ser-71, 153–156, Lys-176, and 181–182; these read FGYD and HR.

Belongs to the HAM1 NTPase family. In terms of assembly, homodimer. The cofactor is Mg(2+).

The catalysed reaction is XTP + H2O = XMP + diphosphate + H(+). It catalyses the reaction dITP + H2O = dIMP + diphosphate + H(+). The enzyme catalyses ITP + H2O = IMP + diphosphate + H(+). Its function is as follows. Pyrophosphatase that catalyzes the hydrolysis of nucleoside triphosphates to their monophosphate derivatives, with a high preference for the non-canonical purine nucleotides XTP (xanthosine triphosphate), dITP (deoxyinosine triphosphate) and ITP. Seems to function as a house-cleaning enzyme that removes non-canonical purine nucleotides from the nucleotide pool, thus preventing their incorporation into DNA/RNA and avoiding chromosomal lesions. This Bacillus licheniformis (strain ATCC 14580 / DSM 13 / JCM 2505 / CCUG 7422 / NBRC 12200 / NCIMB 9375 / NCTC 10341 / NRRL NRS-1264 / Gibson 46) protein is dITP/XTP pyrophosphatase.